A 319-amino-acid polypeptide reads, in one-letter code: MKTETPSVKIVAIAADEAGQRIDNFLRTQLKGVPKSMIYRILRKGEVRVNKKRIKPEYKLESGDEVRIPPVRVAEREEEAVSPHLQKVAALADVILYEDDHILVLNKPSGTAVHGGSGLSFGVIEGLRALRPEARFLELVHRLDRDTSGVLLVAKKRSALRSLHEQLREKGMQKDYLALVRGQWQSHVKTVQAPLLKNILQSGERIVRVSQEGKPSETRFKVEERYAFATLVRCSPVTGRTHQIRVHTQYAGHPIAFDDRYGDREFDQQLTEAGTGLKRLFLHAAALKFTHPGTGDVMRIEAPMDKQLKRCLEVLRSKA.

The 64-residue stretch at 20-83 (QRIDNFLRTQ…AEREEEAVSP (64 aa)) folds into the S4 RNA-binding domain. Aspartate 144 is an active-site residue.

Belongs to the pseudouridine synthase RluA family.

It carries out the reaction uridine(955/2504/2580) in 23S rRNA = pseudouridine(955/2504/2580) in 23S rRNA. Responsible for synthesis of pseudouridine from uracil at positions 955, 2504 and 2580 in 23S ribosomal RNA. This is Ribosomal large subunit pseudouridine synthase C (rluC) from Salmonella typhi.